The sequence spans 307 residues: Aspartate carbamoyltransferase catalytic subunit (307 aa).

Carbamoyl phosphate is bound by residues Arg54 and Thr55. Lys83 contributes to the L-aspartate binding site. The carbamoyl phosphate site is built by Arg104, His132, and Gln135. L-aspartate is bound by residues Arg165 and Arg228. The carbamoyl phosphate site is built by Leu267 and Pro268.

It belongs to the aspartate/ornithine carbamoyltransferase superfamily. ATCase family. In terms of assembly, heterododecamer (2C3:3R2) of six catalytic PyrB chains organized as two trimers (C3), and six regulatory PyrI chains organized as three dimers (R2).

It catalyses the reaction carbamoyl phosphate + L-aspartate = N-carbamoyl-L-aspartate + phosphate + H(+). It participates in pyrimidine metabolism; UMP biosynthesis via de novo pathway; (S)-dihydroorotate from bicarbonate: step 2/3. Functionally, catalyzes the condensation of carbamoyl phosphate and aspartate to form carbamoyl aspartate and inorganic phosphate, the committed step in the de novo pyrimidine nucleotide biosynthesis pathway. This chain is Aspartate carbamoyltransferase catalytic subunit, found in Clostridium botulinum (strain Okra / Type B1).